Reading from the N-terminus, the 554-residue chain is Malate synthase 2 (554 aa).

Residue Arg-177 is the Proton acceptor of the active site. Asp-457 functions as the Proton donor in the catalytic mechanism. The SKL peroxisome targeting motif motif lies at 552-554 (SKL).

It belongs to the malate synthase family. Interacts with PEX9.

It localises to the peroxisome matrix. The enzyme catalyses glyoxylate + acetyl-CoA + H2O = (S)-malate + CoA + H(+). Functionally, allantoin metabolism-specific malate synthase involved in the recycling the glyoxylate generated during allantoin degradation by the ureidoglycollate (UG) hydrolase reaction. The chain is Malate synthase 2 from Saccharomyces cerevisiae (strain ATCC 204508 / S288c) (Baker's yeast).